Consider the following 131-residue polypeptide: SPbeta prophage-derived UPF0715 membrane protein YopD (131 aa).

4 helical membrane-spanning segments follow: residues 12 to 32 (VYTL…YLFV), 38 to 58 (AIAL…YLVF), 75 to 95 (LINF…FWFV), and 108 to 128 (FEYY…DSIF).

Belongs to the UPF0715 family.

The protein resides in the cell membrane. In Bacillus subtilis (strain 168), this protein is SPbeta prophage-derived UPF0715 membrane protein YopD (yopD).